The primary structure comprises 1956 residues: Probable cation-transporting ATPase 1 (1956 aa).

At 1–35 (MHLMCTGLRNEKLINDRKILYGECNLNIKSDSFII) the chain is on the cytoplasmic side. The chain crosses the membrane as a helical span at residues 36-58 (LLFKEIMNPFFIFQIFAMIVWSL). The Extracellular segment spans residues 59-61 (DNY). Residues 62–80 (IEYTISILFITSISIILEL) form a helical membrane-spanning segment. The Cytoplasmic portion of the chain corresponds to 81–407 (KNTIKNQKKI…KKELNLINDS (327 aa)). The helical transmembrane segment at 408-427 (YKFLIILIIYALFSVFILLY) threads the bilayer. The Extracellular portion of the chain corresponds to 428 to 440 (ITLSNNEYTNHII). Residues 441–462 (IKCLDIITDAIPPALPTTLTVG) form a helical membrane-spanning segment. At 463 to 1818 (ISIAISRLKK…SLVNSFQLFK (1356 aa)) the chain is on the cytoplasmic side. The active-site 4-aspartylphosphate intermediate is the Asp-496. The segment at 901–938 (YGNNNDDNNDDDNNNDDDNNDDNNNDDNNNDDNNDDNN) is disordered. Over residues 907–935 (DNNDDDNNNDDDNNDDNNNDDNNNDDNND) the composition is skewed to acidic residues. Mg(2+) is bound by residues Asp-1760 and Asp-1764. The chain crosses the membrane as a helical span at residues 1819 to 1837 (FISLYSIMQCSQVLILYSI). Residues 1838 to 1845 (SNKLTDNQ) lie on the Extracellular side of the membrane. A helical transmembrane segment spans residues 1846 to 1863 (YIFIDIVTILPLSIFMCW). The Cytoplasmic segment spans residues 1864–1881 (TSASEKLSKNIPIGKLFS). The helical transmembrane segment at 1882-1905 (FPILISIYGQIIIQLFFVMISLVV) threads the bilayer. Topologically, residues 1906-1928 (LMNLSFYKYDKNKVMKEKSDDTY) are extracellular. The helical transmembrane segment at 1929 to 1952 (LYKAQKYTLIYSLLFSKFVYVYIF) threads the bilayer. The Cytoplasmic portion of the chain corresponds to 1953-1956 (KYKE).

The protein belongs to the cation transport ATPase (P-type) (TC 3.A.3) family. Type V subfamily.

Its subcellular location is the membrane. It catalyses the reaction ATP + H2O = ADP + phosphate + H(+). The sequence is that of Probable cation-transporting ATPase 1 from Plasmodium falciparum.